The primary structure comprises 463 residues: ATP synthase subunit beta (463 aa).

152 to 159 (GGAGVGKT) contacts ATP.

The protein belongs to the ATPase alpha/beta chains family. As to quaternary structure, F-type ATPases have 2 components, CF(1) - the catalytic core - and CF(0) - the membrane proton channel. CF(1) has five subunits: alpha(3), beta(3), gamma(1), delta(1), epsilon(1). CF(0) has three main subunits: a(1), b(2) and c(9-12). The alpha and beta chains form an alternating ring which encloses part of the gamma chain. CF(1) is attached to CF(0) by a central stalk formed by the gamma and epsilon chains, while a peripheral stalk is formed by the delta and b chains.

It is found in the cell inner membrane. It carries out the reaction ATP + H2O + 4 H(+)(in) = ADP + phosphate + 5 H(+)(out). Its function is as follows. Produces ATP from ADP in the presence of a proton gradient across the membrane. The catalytic sites are hosted primarily by the beta subunits. The sequence is that of ATP synthase subunit beta from Shewanella sp. (strain MR-7).